Here is a 222-residue protein sequence, read N- to C-terminus: Coiled-coil domain-containing protein 70 (222 aa).

The stretch at 129-153 (NALWERDRNLLQEDKALWEEEKALW) forms a coiled coil.

The sequence is that of Coiled-coil domain-containing protein 70 from Homo sapiens (Human).